The chain runs to 86 residues: Apolipoprotein C-I (86 aa).

An N-terminal signal peptide occupies residues 1–26 (MRLFLSLPVLVVALLTILEGPGPAQG).

The protein belongs to the apolipoprotein C1 family.

The protein localises to the secreted. Its function is as follows. Inhibitor of lipoprotein binding to the low density lipoprotein (LDL) receptor, LDL receptor-related protein, and very low density lipoprotein (VLDL) receptor. Associates with high density lipoproteins (HDL) and the triacylglycerol-rich lipoproteins in the plasma and makes up about 10% of the protein of the VLDL and 2% of that of HDL. Appears to interfere directly with fatty acid uptake and is also the major plasma inhibitor of cholesteryl ester transfer protein (CETP). Binds free fatty acids and reduces their intracellular esterification. Modulates the interaction of APOE with beta-migrating VLDL and inhibits binding of beta-VLDL to the LDL receptor-related protein. This chain is Apolipoprotein C-I (APOC1), found in Plecturocebus moloch (Dusky titi monkey).